Here is a 113-residue protein sequence, read N- to C-terminus: Cell division topological specificity factor (113 aa).

Belongs to the MinE family.

Prevents the cell division inhibition by proteins MinC and MinD at internal division sites while permitting inhibition at polar sites. This ensures cell division at the proper site by restricting the formation of a division septum at the midpoint of the long axis of the cell. The protein is Cell division topological specificity factor of Methylobacterium radiotolerans (strain ATCC 27329 / DSM 1819 / JCM 2831 / NBRC 15690 / NCIMB 10815 / 0-1).